A 178-amino-acid polypeptide reads, in one-letter code: Crossover junction endodeoxyribonuclease RuvC (178 aa).

Catalysis depends on residues aspartate 8, glutamate 72, and aspartate 144. Residues aspartate 8, glutamate 72, and aspartate 144 each contribute to the Mg(2+) site.

It belongs to the RuvC family. Homodimer which binds Holliday junction (HJ) DNA. The HJ becomes 2-fold symmetrical on binding to RuvC with unstacked arms; it has a different conformation from HJ DNA in complex with RuvA. In the full resolvosome a probable DNA-RuvA(4)-RuvB(12)-RuvC(2) complex forms which resolves the HJ. Requires Mg(2+) as cofactor.

Its subcellular location is the cytoplasm. The enzyme catalyses Endonucleolytic cleavage at a junction such as a reciprocal single-stranded crossover between two homologous DNA duplexes (Holliday junction).. Its function is as follows. The RuvA-RuvB-RuvC complex processes Holliday junction (HJ) DNA during genetic recombination and DNA repair. Endonuclease that resolves HJ intermediates. Cleaves cruciform DNA by making single-stranded nicks across the HJ at symmetrical positions within the homologous arms, yielding a 5'-phosphate and a 3'-hydroxyl group; requires a central core of homology in the junction. The consensus cleavage sequence is 5'-(A/T)TT(C/G)-3'. Cleavage occurs on the 3'-side of the TT dinucleotide at the point of strand exchange. HJ branch migration catalyzed by RuvA-RuvB allows RuvC to scan DNA until it finds its consensus sequence, where it cleaves and resolves the cruciform DNA. The sequence is that of Crossover junction endodeoxyribonuclease RuvC from Idiomarina loihiensis (strain ATCC BAA-735 / DSM 15497 / L2-TR).